The following is a 747-amino-acid chain: DNA topoisomerase 4 subunit A (747 aa).

The region spanning 35 to 498 (LPFIGDGLKP…EAKMISESDM (464 aa)) is the Topo IIA-type catalytic domain. Residue tyrosine 124 is the O-(5'-phospho-DNA)-tyrosine intermediate of the active site.

Belongs to the type II topoisomerase GyrA/ParC subunit family. ParC type 1 subfamily. As to quaternary structure, heterotetramer composed of ParC and ParE.

The protein localises to the cell membrane. The enzyme catalyses ATP-dependent breakage, passage and rejoining of double-stranded DNA.. Topoisomerase IV is essential for chromosome segregation. It relaxes supercoiled DNA. Performs the decatenation events required during the replication of a circular DNA molecule. The chain is DNA topoisomerase 4 subunit A from Haemophilus influenzae (strain ATCC 51907 / DSM 11121 / KW20 / Rd).